Consider the following 176-residue polypeptide: T cell receptor beta constant 1 (176 aa).

Residues 8–117 enclose the Ig-like C1-type domain; the sequence is PEVAVFEPSE…WTQDRAKPVT (110 aa). Cys30 and Cys95 are disulfide-bonded. Asn69 is a glycosylation site (N-linked (GlcNAc...) asparagine). Residues 130–144 are connecting peptide; sequence CGFTSVSYQQGVLSA. The helical transmembrane segment at 150–170 threads the bilayer; that stretch reads ILLGKATLYAVLVSALVLMAM. The Cytoplasmic portion of the chain corresponds to 171-176; it reads VKRKDF.

In terms of assembly, alpha-beta TR is a heterodimer composed of an alpha and beta chain; disulfide-linked. The alpha-beta TR is associated with the transmembrane signaling CD3 coreceptor proteins to form the TR-CD3 (TcR or TCR). The assembly of alpha-beta TR heterodimers with CD3 occurs in the endoplasmic reticulum where a single alpha-beta TR heterodimer associates with one CD3D-CD3E heterodimer, one CD3G-CD3E heterodimer and one CD247 homodimer forming a stable octameric structure. CD3D-CD3E and CD3G-CD3E heterodimers preferentially associate with TR alpha and TR beta chains, respectively. The association of the CD247 homodimer is the last step of TcR assembly in the endoplasmic reticulum and is required for transport to the cell surface.

The protein resides in the cell membrane. Functionally, constant region of T cell receptor (TR) beta chain. Alpha-beta T cell receptors are antigen specific receptors which are essential to the immune response and are present on the cell surface of T lymphocytes. Recognize peptide-major histocompatibility (MH) (pMH) complexes that are displayed by antigen presenting cells (APC), a prerequisite for efficient T cell adaptive immunity against pathogens. Binding of alpha-beta TR to pMH complex initiates TR-CD3 clustering on the cell surface and intracellular activation of LCK that phosphorylates the ITAM motifs of CD3G, CD3D, CD3E and CD247 enabling the recruitment of ZAP70. In turn, ZAP70 phosphorylates LAT, which recruits numerous signaling molecules to form the LAT signalosome. The LAT signalosome propagates signal branching to three major signaling pathways, the calcium, the mitogen-activated protein kinase (MAPK) kinase and the nuclear factor NF-kappa-B (NF-kB) pathways, leading to the mobilization of transcription factors that are critical for gene expression and essential for T cell growth and differentiation. The T cell repertoire is generated in the thymus, by V-(D)-J rearrangement. This repertoire is then shaped by intrathymic selection events to generate a peripheral T cell pool of self-MH restricted, non-autoaggressive T cells. Post-thymic interaction of alpha-beta TR with the pMH complexes shapes TR structural and functional avidity. This is T cell receptor beta constant 1 from Homo sapiens (Human).